The primary structure comprises 158 residues: Small ribosomal subunit protein uS9 (158 aa).

It belongs to the universal ribosomal protein uS9 family.

The polypeptide is Small ribosomal subunit protein uS9 (Brucella anthropi (strain ATCC 49188 / DSM 6882 / CCUG 24695 / JCM 21032 / LMG 3331 / NBRC 15819 / NCTC 12168 / Alc 37) (Ochrobactrum anthropi)).